Consider the following 864-residue polypeptide: A-kinase anchor protein 3 (864 aa).

At S12 the chain carries Phosphoserine; by STK33. A PKA-RII subunit binding domain region spans residues 125-138 (VSFYANRLTNLVIA). Disordered stretches follow at residues 190–235 (NISS…DKPG) and 251–281 (AGDAKEGGRSLPGDQKLFRTSPDNRPDDFSN). Polar residues predominate over residues 204–218 (SGSSQAPGLRYTSTL). S206 bears the Phosphoserine mark. Basic and acidic residues predominate over residues 219-235 (KIKESTKEGKCPDDKPG). Phosphoserine is present on S405. Y406 carries the post-translational modification Phosphotyrosine. The disordered stretch occupies residues 619 to 638 (VHEQNTQEEEIHPCERPKTP). Residues 627 to 638 (EEIHPCERPKTP) show a composition bias toward basic and acidic residues.

This sequence belongs to the AKAP110 family. Interacts with ROPN1 and ROPN1L. Interacts with QRICH2. Phosphorylated by STK33 during sperm flagella assembly. Phosphorylated on tyrosine.

The protein resides in the cytoplasmic vesicle. The protein localises to the secretory vesicle. Its subcellular location is the acrosome. It localises to the cell projection. It is found in the cilium. The protein resides in the flagellum. Its function is as follows. Structural component of sperm fibrous sheath. Required for the formation of the subcellular structure of the sperm flagellum, sperm motility and male fertility. The protein is A-kinase anchor protein 3 of Mus musculus (Mouse).